Consider the following 486-residue polypeptide: Recombining binding protein suppressor of hairless (486 aa).

DNA-binding stretches follow at residues 43–53 (QKSYGNEKRFF) and 151–156 (SKPSKK). At K161 the chain carries N6-acetyllysine. Positions 178 to 183 (RLRSQT) are DNA-binding. In terms of domain architecture, IPT/TIG spans 341–431 (PVVESLQLNG…YSTSLTFTYT (91 aa)). Positions 451–467 (SSQVPPNESNTNSEGSY) are enriched in polar residues. The interval 451-486 (SSQVPPNESNTNSEGSYTNASTNSTSVTSSTATVVS) is disordered. The segment covering 468 to 486 (TNASTNSTSVTSSTATVVS) has biased composition (low complexity).

The protein belongs to the Su(H) family. In terms of assembly, interacts with activated NOTCH1, NOTCH2 or NOTCH3. Interacts with MINT/SHARP. This interaction may mediate the recruitment of large corepressor complexes containing proteins such as HDAC1, HDAC2, NCOR2, SAP30, FHL1/KYOT2 and CIR1. Interacts with EP300, MAML1 and PTF1A. Interacts with RITA1, leading to nuclear export, prevent the interaction between RBPJ and NICD product and subsequent down-regulation of the Notch signaling pathway. Interacts with SNW1. Interacts with CHCHD2 and CXXC5. Interacts with BEND6 (via BEN domain). Interacts with NKAPL. Interacts with ZMIZ1. Interacts with RBM15. Interacts with L3MBTL3 and KDM1A; the interaction with KDM1A is weaker in the absence of L3MBTL3 and the interaction with L3MBTL3 is impaired by Notch-derived peptides containing the intracellular domain (NICD).

The protein resides in the nucleus. It is found in the cytoplasm. Functionally, transcriptional regulator that plays a central role in Notch signaling, a signaling pathway involved in cell-cell communication that regulates a broad spectrum of cell-fate determinations. Acts as a transcriptional repressor when it is not associated with Notch proteins. When associated with some NICD product of Notch proteins (Notch intracellular domain), it acts as a transcriptional activator that activates transcription of Notch target genes. Probably represses or activates transcription via the recruitment of chromatin remodeling complexes containing histone deacetylase or histone acetylase proteins, respectively. Specifically binds to the immunoglobulin kappa-type J segment recombination signal sequence. Binds specifically to methylated DNA. Binds to the oxygen responsive element of COX4I2 and activates its transcription under hypoxia conditions (4% oxygen). Negatively regulates the phagocyte oxidative burst in response to bacterial infection by repressing transcription of NADPH oxidase subunits. This Pongo abelii (Sumatran orangutan) protein is Recombining binding protein suppressor of hairless (RBPJ).